The primary structure comprises 497 residues: IWS1-like protein (497 aa).

The interval 1 to 191 is disordered; it reads MSDHEGASPA…SDRRGGRNFE (191 aa). Low complexity-rich tracts occupy residues 7 to 23 and 47 to 57; these read ASPA…PVSP and PLAPRSPASPR. Composition is skewed to basic and acidic residues over residues 123–134, 144–160, and 181–191; these read EGDKQQKRKDLF, DRPK…VKGD, and PSDRRGGRNFE. A TFIIS N-terminal domain is found at 281–361; sequence SALSEWLAPL…GEWARPIYHL (81 aa). A disordered region spans residues 369 to 433; the sequence is SRQEREERDY…GDKGYINRAR (65 aa). Composition is skewed to basic and acidic residues over residues 370–382 and 401–411; these read RQER…SRMP and APKRPRIRDAE.

This sequence belongs to the IWS1 family.

The protein localises to the nucleus. The protein is IWS1-like protein of Caenorhabditis briggsae.